A 201-amino-acid polypeptide reads, in one-letter code: ATP-dependent Clp protease proteolytic subunit (201 aa).

Ser-98 serves as the catalytic Nucleophile. Residue His-123 is part of the active site.

The protein belongs to the peptidase S14 family. As to quaternary structure, fourteen ClpP subunits assemble into 2 heptameric rings which stack back to back to give a disk-like structure with a central cavity, resembling the structure of eukaryotic proteasomes.

It localises to the cytoplasm. It carries out the reaction Hydrolysis of proteins to small peptides in the presence of ATP and magnesium. alpha-casein is the usual test substrate. In the absence of ATP, only oligopeptides shorter than five residues are hydrolyzed (such as succinyl-Leu-Tyr-|-NHMec, and Leu-Tyr-Leu-|-Tyr-Trp, in which cleavage of the -Tyr-|-Leu- and -Tyr-|-Trp bonds also occurs).. In terms of biological role, cleaves peptides in various proteins in a process that requires ATP hydrolysis. Has a chymotrypsin-like activity. Plays a major role in the degradation of misfolded proteins. The protein is ATP-dependent Clp protease proteolytic subunit of Neorickettsia sennetsu (strain ATCC VR-367 / Miyayama) (Ehrlichia sennetsu).